Consider the following 177-residue polypeptide: UBA-like domain-containing protein 1 (177 aa).

Positions 89–177 (ESFHSGGSGS…RAHPAMEAER (89 aa)) are disordered. Residues 112-138 (PHAATSSSAASSWPTAASPPGGPQHHQ) are compositionally biased toward low complexity. Positions 139–151 (PQPPLWTPTPPSP) are enriched in pro residues. The span at 167 to 177 (PRAHPAMEAER) shows a compositional bias: basic and acidic residues.

This sequence belongs to the UBALD family.

In Homo sapiens (Human), this protein is UBA-like domain-containing protein 1 (UBALD1).